Consider the following 423-residue polypeptide: Histidine--tRNA ligase (423 aa).

Belongs to the class-II aminoacyl-tRNA synthetase family. Homodimer.

It localises to the cytoplasm. The catalysed reaction is tRNA(His) + L-histidine + ATP = L-histidyl-tRNA(His) + AMP + diphosphate + H(+). This is Histidine--tRNA ligase from Staphylococcus haemolyticus (strain JCSC1435).